We begin with the raw amino-acid sequence, 377 residues long: RING-H2 finger protein ATL22 (377 aa).

The first 23 residues, 1-23 (MTSKLLPLLLNLIFLFFFPLLNA), serve as a signal peptide directing secretion. Residues 244–264 (IMCLSLVGPLTALTFCVGLVM) form a helical membrane-spanning segment. The segment at 327 to 369 (CPICLSEYATKETVRCLPECEHCFHTECIDAWLKLHSSCPVCR) adopts an RING-type; atypical zinc-finger fold.

It belongs to the RING-type zinc finger family. ATL subfamily.

The protein resides in the membrane. The catalysed reaction is S-ubiquitinyl-[E2 ubiquitin-conjugating enzyme]-L-cysteine + [acceptor protein]-L-lysine = [E2 ubiquitin-conjugating enzyme]-L-cysteine + N(6)-ubiquitinyl-[acceptor protein]-L-lysine.. Its pathway is protein modification; protein ubiquitination. This is RING-H2 finger protein ATL22 (ATL22) from Arabidopsis thaliana (Mouse-ear cress).